The sequence spans 413 residues: Peptidase T (413 aa).

Residue His81 participates in Zn(2+) binding. Asp83 is a catalytic residue. Asp143 is a Zn(2+) binding site. The active-site Proton acceptor is Glu178. Zn(2+) contacts are provided by Glu179, Asp201, and His383.

Belongs to the peptidase M20B family. Zn(2+) serves as cofactor.

The protein resides in the cytoplasm. It catalyses the reaction Release of the N-terminal residue from a tripeptide.. Functionally, cleaves the N-terminal amino acid of tripeptides. This Lactococcus lactis subsp. hordniae protein is Peptidase T.